Reading from the N-terminus, the 1232-residue chain is Anoctamin-8 (1232 aa).

The interval 1–32 is disordered; the sequence is MAEAASGAGGTSLEGERGKRPPPEGEPAAPAS. The residue at position 2 (Ala2) is an N-acetylalanine. Topologically, residues 2 to 244 are extracellular; sequence AEAASGAGGT…DDICDYFGVK (243 aa). Positions 14 to 23 are enriched in basic and acidic residues; that stretch reads EGERGKRPPP. A helical membrane pass occupies residues 245-265; the sequence is IAMYFAWLGFYTSAMVYPAVF. Topologically, residues 266-281 are cytoplasmic; the sequence is GSVLYTFTEADQTSRD. The helical transmembrane segment at 282 to 302 threads the bilayer; that stretch reads VSCVVFALFNVIWSTLFLEEW. Residues 303-356 lie on the Extracellular side of the membrane; sequence KRRGAELAYKWGTLDSPGEAVEEPRPQFRGVRRISPITRAEEFYYPPWKRLLFQ. Position 318 is a phosphoserine (Ser318). A helical transmembrane segment spans residues 357-377; the sequence is LLVSLPLCLACLVCVFLLMLG. The Cytoplasmic segment spans residues 378 to 400; the sequence is CFQLQELVLSVKGLPRLARFLPK. The helical transmembrane segment at 401-421 threads the bilayer; sequence VMLALLVSVSAEGYKKLAIWL. At 422–437 the chain is on the extracellular side; the sequence is NDMENYRLESAYEKHL. A helical membrane pass occupies residues 438–458; sequence IIKVVLFQFVNSYLSLFYIGF. The Cytoplasmic portion of the chain corresponds to 459 to 750; that stretch reads YLKDMERLKE…YEDTFQDYQE (292 aa). Residues 524-650 form a disordered region; the sequence is RRLEPQADEG…SPTMVEKGLE (127 aa). A compositionally biased stretch (gly residues) spans 532–551; that stretch reads EGGGGGSGGGGRRCLSGGCG. Acidic residues predominate over residues 582–606; that stretch reads EEDEDDEEEEDEEEEEDEEEGEEGG. Phosphoserine is present on Ser669. The tract at residues 681 to 728 is disordered; sequence RAGGEGRDQGPDGGPDPEPGSNSDSTRRQRRQNRSSWIDPPEEEHSPQ. A helical membrane pass occupies residues 751–771; sequence MFVQFGYVVLFSSAFPLAALC. At 772–807 the chain is on the extracellular side; the sequence is ALVNNLIEIRSDAFKLCTGLQRPFGQRVESIGQWQK. Ser801 carries the post-translational modification Phosphoserine; by FAM20C. The helical transmembrane segment at 808-828 threads the bilayer; the sequence is VMEAMGVLAIVVNCYLIGQCG. Residues 829-841 lie on the Cytoplasmic side of the membrane; that stretch reads QLQRLFPWLSPEA. A helical transmembrane segment spans residues 842–862; that stretch reads AIVSVVVLEHFALLLKYLIHV. The Extracellular portion of the chain corresponds to 863 to 1232; sequence AIPDIPGWVA…QAVCWPSGWH (370 aa). Disordered stretches follow at residues 888–970, 997–1152, and 1174–1232; these read RHER…GSLL, LAAA…WQWD, and PPCA…SGWH. Residues 904-932 are compositionally biased toward basic and acidic residues; the sequence is RREEEERQRHAEHHARREHDSGGREEARA. Composition is skewed to low complexity over residues 933–953 and 997–1006; these read EGSG…AKGS and LAAAGAGATT. Arg1020 carries the post-translational modification Asymmetric dimethylarginine; alternate. Arg1020 carries the post-translational modification Omega-N-methylarginine; alternate. Over residues 1031–1043 the composition is skewed to basic and acidic residues; the sequence is KSPETRRDSERSH. Positions 1078–1087 are enriched in polar residues; it reads TPSSGSSRVQ. 2 stretches are compositionally biased toward pro residues: residues 1130 to 1145 and 1197 to 1221; these read PAPP…PTPP and LPPP…PSPS.

Belongs to the anoctamin family. Expressed in embryonic stem cells, fetal brain and neural tissues.

Its subcellular location is the cell membrane. Its function is as follows. Does not exhibit calcium-activated chloride channel (CaCC) activity. This Homo sapiens (Human) protein is Anoctamin-8 (ANO8).